Here is a 375-residue protein sequence, read N- to C-terminus: Platelet-derived growth factor receptor-like protein (375 aa).

A signal peptide spans Met-1–Gly-17. The segment at Val-19–Lys-63 is disordered. Basic residues predominate over residues Pro-40–Pro-50. Positions Pro-62–Arg-159 constitute an Ig-like C2-type 1 domain. Cys-96 and Cys-143 form a disulfide bridge. Asn-219 is a glycosylation site (N-linked (GlcNAc...) asparagine). The Ig-like C2-type 2 domain maps to Pro-272–Ser-375. A disulfide bond links Cys-293 and Cys-357.

In terms of assembly, forms a complex composed of PDGFRL, TNK2 and GRB2.

Its subcellular location is the secreted. This chain is Platelet-derived growth factor receptor-like protein (Pdgfrl), found in Rattus norvegicus (Rat).